Consider the following 171-residue polypeptide: Transcriptional repressor NrdR (171 aa).

A compositionally biased stretch (basic residues) spans 1-10 (MQCPHCHHNG). Residues 1 to 21 (MQCPHCHHNGSRVVDSRPTDD) are disordered. A zinc finger spans residues 3 to 34 (CPHCHHNGSRVVDSRPTDDGRVIRRRRECENC). Positions 49–139 (LLVIKKNGAR…VYRQFKDMHV (91 aa)) constitute an ATP-cone domain. The disordered stretch occupies residues 152 to 171 (KVKLAKPSAKTTHAPKRKKD).

It belongs to the NrdR family. Zn(2+) serves as cofactor.

Functionally, negatively regulates transcription of bacterial ribonucleotide reductase nrd genes and operons by binding to NrdR-boxes. In Lactiplantibacillus plantarum (strain ATCC BAA-793 / NCIMB 8826 / WCFS1) (Lactobacillus plantarum), this protein is Transcriptional repressor NrdR.